Reading from the N-terminus, the 197-residue chain is Prefoldin subunit 3 (197 aa).

Residue alanine 2 is modified to N-acetylalanine. At lysine 59 the chain carries N6-acetyllysine.

Belongs to the prefoldin subunit alpha family. In terms of assembly, heterohexamer of two PFD-alpha type and four PFD-beta type subunits. Binds to the C-terminal part of VHL. As to expression, ubiquitous.

It is found in the cytoplasm. It localises to the nucleus. Its function is as follows. Binds specifically to cytosolic chaperonin (c-CPN) and transfers target proteins to it. Binds to nascent polypeptide chain and promotes folding in an environment in which there are many competing pathways for nonnative proteins. The protein is Prefoldin subunit 3 (VBP1) of Homo sapiens (Human).